The primary structure comprises 512 residues: Bifunctional NAD(P)H-hydrate repair enzyme Nnr (512 aa).

Residues 1–220 (MPIVAYDPDK…GVPPRLVLPQ (220 aa)) are NAD(P)H-hydrate epimerase. Residues 11–218 (VREADRAAVR…PIGVPPRLVL (208 aa)) form the YjeF N-terminal domain. Residues 58–62 (NNGGD) are NADPHX 1; for epimerase activity. K(+) is bound by residues N59 and D127. The tract at residues 131–137 (GTGSGGE) is NADPHX 1; for epimerase activity. Residue D161 coordinates (6S)-NADPHX. K(+) is bound at residue T164. The YjeF C-terminal domain maps to 228 to 509 (GYEDLSHMRL…HQAALVLGGL (282 aa)). Residues 228 to 512 (GYEDLSHMRL…ALVLGGLGDV (285 aa)) form an ADP-dependent (S)-NAD(P)H-hydrate dehydratase region. G335 serves as a coordination point for (6S)-NADPHX. The NADPHX 2; for dehydratase activity stretch occupies residues 385–391 (HEGEAAC). ADP-binding positions include 421 to 425 (KGRNS) and 440 to 449 (HPNLSVPGSG). Residue D450 participates in (6S)-NADPHX binding.

This sequence in the N-terminal section; belongs to the NnrE/AIBP family. In the C-terminal section; belongs to the NnrD/CARKD family. Requires K(+) as cofactor.

The enzyme catalyses (6S)-NADHX + ADP = AMP + phosphate + NADH + H(+). It carries out the reaction (6S)-NADPHX + ADP = AMP + phosphate + NADPH + H(+). It catalyses the reaction (6R)-NADHX = (6S)-NADHX. The catalysed reaction is (6R)-NADPHX = (6S)-NADPHX. In terms of biological role, bifunctional enzyme that catalyzes the epimerization of the S- and R-forms of NAD(P)HX and the dehydration of the S-form of NAD(P)HX at the expense of ADP, which is converted to AMP. This allows the repair of both epimers of NAD(P)HX, a damaged form of NAD(P)H that is a result of enzymatic or heat-dependent hydration. This chain is Bifunctional NAD(P)H-hydrate repair enzyme Nnr (nnr), found in Thermanaerovibrio acidaminovorans (strain ATCC 49978 / DSM 6589 / Su883) (Selenomonas acidaminovorans).